The following is a 629-amino-acid chain: MQFHERFDVIVVGGGHAGTEAALASARMGSKTLLLTHNIDTLGQMSCNPAIGGIGKGHLVKEIDALGGAMAVATDFAGIQFRTLNSSKGPAVRATRAQADRALYRHKIQEILQHQANLRIFQQAVDDLVVENGKVVGVVTQMGLAFEAPAVVLTAGTFLGGKIHIGLENYSGGRAGDPPAIALAHRLRELPIRVGRLKTGTPPRIDANTIDFSQMTEQKGDDPLPVMSFIGDVNDHPEQVSCHITHTNERTHDIIRGGLDRSPMYSGIIEGIGPRYCPSIEDKVNRFADKTSHQIFIEPEGLNTTEIYPNGISTSLPFDVQLNLVRSIKGMENAEIMRPGYAIEYDYFDPRDLKNSLETKTIAGLFFAGQINGTTGYEEAGAQGLLAGMNASLQVQGKEAWCPRRDQAYLGVLVDDLSTLGTKEPYRMFTSRAEYRLLLREDNADLRLTEKGRELGLVDDNRWALFSEKMESIETELQRLRGQWVHPNSPLVEALNPHLNTPITREATFEDLLRRPEMDYPKLMSIDGFGPSLEDQRAAEQVQIQVKYSGYIQRQQGEIDKAIRHETTLLPLDLDYQEVPGLSNEVIAKMNEHKPETIGQASRISGMTPAAISILLVHLKKRGLLRKSA.

FAD is bound at residue 13–18; that stretch reads GGGHAG. Position 273 to 287 (273 to 287) interacts with NAD(+); that stretch reads GPRYCPSIEDKVNRF.

This sequence belongs to the MnmG family. Homodimer. Heterotetramer of two MnmE and two MnmG subunits. It depends on FAD as a cofactor.

The protein resides in the cytoplasm. NAD-binding protein involved in the addition of a carboxymethylaminomethyl (cmnm) group at the wobble position (U34) of certain tRNAs, forming tRNA-cmnm(5)s(2)U34. This is tRNA uridine 5-carboxymethylaminomethyl modification enzyme MnmG from Shewanella pealeana (strain ATCC 700345 / ANG-SQ1).